The sequence spans 559 residues: Transcription activator of gluconeogenesis ERT1-2 (559 aa).

Positions 23-51 form a DNA-binding region, zn(2)-C6 fungal-type; the sequence is CIHCQRTHLTCDNNRPCERCVARGFADTC. 3 disordered regions span residues 63–159, 231–263, and 329–349; these read DDKE…TPSQ, SNSL…TPSA, and AGQP…DSPS. 2 stretches are compositionally biased toward low complexity: residues 139–159 and 231–244; these read QGPQ…TPSQ and SNSL…QSPN. The segment covering 245–260 has biased composition (polar residues); it reads THSPHNQDQPTPQAAT. The PAS domain occupies 440 to 512; sequence ALLEYQKFIS…ELFSRIAFGD (73 aa).

Belongs to the ERT1/acuK family.

The protein localises to the nucleus. Transcription factor which regulates nonfermentable carbon utilization. Activator of gluconeogenetic genes. The polypeptide is Transcription activator of gluconeogenesis ERT1-2 (ERT1-2) (Yarrowia lipolytica (strain CLIB 122 / E 150) (Yeast)).